The chain runs to 252 residues: 3-dehydroquinate dehydratase (252 aa).

3-dehydroquinate contacts are provided by residues 46 to 48 (EWR) and Arg-82. The active-site Proton donor/acceptor is the His-143. Residue Lys-170 is the Schiff-base intermediate with substrate of the active site. Arg-212, Ser-231, and Gln-235 together coordinate 3-dehydroquinate.

Belongs to the type-I 3-dehydroquinase family. Homodimer.

The enzyme catalyses 3-dehydroquinate = 3-dehydroshikimate + H2O. Its pathway is metabolic intermediate biosynthesis; chorismate biosynthesis; chorismate from D-erythrose 4-phosphate and phosphoenolpyruvate: step 3/7. Involved in the third step of the chorismate pathway, which leads to the biosynthesis of aromatic amino acids. Catalyzes the cis-dehydration of 3-dehydroquinate (DHQ) and introduces the first double bond of the aromatic ring to yield 3-dehydroshikimate. The chain is 3-dehydroquinate dehydratase from Listeria monocytogenes serotype 4b (strain CLIP80459).